We begin with the raw amino-acid sequence, 154 residues long: Aspartate carbamoyltransferase regulatory chain (154 aa).

Residues C109, C114, C138, and C141 each coordinate Zn(2+).

It belongs to the PyrI family. As to quaternary structure, contains catalytic and regulatory chains. Requires Zn(2+) as cofactor.

Functionally, involved in allosteric regulation of aspartate carbamoyltransferase. This is Aspartate carbamoyltransferase regulatory chain from Photorhabdus laumondii subsp. laumondii (strain DSM 15139 / CIP 105565 / TT01) (Photorhabdus luminescens subsp. laumondii).